Here is a 1657-residue protein sequence, read N- to C-terminus: Ras GTPase-activating-like protein IQGAP1 (1657 aa).

The residue at position 2 (S2) is an N-acetylserine. S2 carries the post-translational modification Phosphoserine. The Calponin-homology (CH) domain maps to 44 to 159; sequence LCHLEEAKRW…YCIHALSLYL (116 aa). At Y172 the chain carries Phosphotyrosine. S330 bears the Phosphoserine mark. In terms of domain architecture, WW spans 685–710; sequence WVKHWVKGGYHYYHNLETQAGGWAEP. IQ domains lie at 745 to 774, 775 to 804, 805 to 834, and 835 to 864; these read NEGL…FLKK, QIPA…YLHS, HKDE…YFRD, and HIND…AEDP. A C1 region spans residues 956 to 1274; that stretch reads GGLKALSKEK…FFQVACDVPE (319 aa). A Ras-GAP domain is found at 1020 to 1269; sequence YLLLRLFQTA…QKFRRFFQVA (250 aa). The tract at residues 1276–1657 is C2; it reads QDKFNVDEYS…FLLNKKFYGK (382 aa). Position 1441 is a phosphoserine (S1441).

In terms of assembly, interacts with CDC42; the interaction is demonstrated with IQGAP1 in GTP-bound and in nucleotide-free state. Interacts with RAC1. Does not interact with RHOA. Interacts with TSG101. Interacts with PAK6. Interacts with SASH1. Interacts with PJVK. Interacts with SLC26A4. This interaction enhances the chloride-bicarbonate exchange activity of SLC26A4. Interacts with SVEP1. Interacts with ILK; the interaction is required for localization of IQGAP to the cell cortex. (Microbial infection) In case of infection, interacts with S.typhimurium protein sseI. In terms of tissue distribution, expressed in the kidney (at protein level).

It is found in the cell membrane. Its subcellular location is the nucleus. The protein localises to the cytoplasm. The protein resides in the cell cortex. It localises to the apical cell membrane. It is found in the basolateral cell membrane. Functionally, plays a crucial role in regulating the dynamics and assembly of the actin cytoskeleton. Recruited to the cell cortex by interaction with ILK which allows it to cooperate with its effector DIAPH1 to locally stabilize microtubules and allow stable insertion of caveolae into the plasma membrane. Binds to activated CDC42 but does not stimulate its GTPase activity. Associates with calmodulin. May promote neurite outgrowth. May play a possible role in cell cycle regulation by contributing to cell cycle progression after DNA replication arrest. The chain is Ras GTPase-activating-like protein IQGAP1 (Iqgap1) from Mus musculus (Mouse).